The sequence spans 317 residues: Protein-methionine-sulfoxide reductase catalytic subunit MsrP (317 aa).

The segment at residues 1–40 is a signal peptide (tat-type signal); that stretch reads MNKFTKTDVTPEKLFIQRRKIIQGMSVLSAAAAFPNLAAA. Mo-molybdopterin contacts are provided by residues Asn-72, 75 to 76, Cys-129, Thr-164, Asn-216, Arg-221, and 232 to 234; these read YE and SIK.

Belongs to the MsrP family. As to quaternary structure, heterodimer of a catalytic subunit (MsrP) and a heme-binding subunit (MsrQ). Mo-molybdopterin serves as cofactor. Post-translationally, predicted to be exported by the Tat system. The position of the signal peptide cleavage has not been experimentally proven.

Its subcellular location is the periplasm. It catalyses the reaction L-methionyl-[protein] + a quinone + H2O = L-methionyl-(S)-S-oxide-[protein] + a quinol. The enzyme catalyses L-methionyl-[protein] + a quinone + H2O = L-methionyl-(R)-S-oxide-[protein] + a quinol. Its function is as follows. Part of the MsrPQ system that repairs oxidized periplasmic proteins containing methionine sulfoxide residues (Met-O), using respiratory chain electrons. Thus protects these proteins from oxidative-stress damage caused by reactive species of oxygen and chlorine generated by the host defense mechanisms. MsrPQ is essential for the maintenance of envelope integrity under bleach stress, rescuing a wide series of structurally unrelated periplasmic proteins from methionine oxidation. The catalytic subunit MsrP is non-stereospecific, being able to reduce both (R-) and (S-) diastereoisomers of methionine sulfoxide. In Actinobacillus succinogenes (strain ATCC 55618 / DSM 22257 / CCUG 43843 / 130Z), this protein is Protein-methionine-sulfoxide reductase catalytic subunit MsrP.